The primary structure comprises 154 residues: uncharacterized protein (154 aa).

3 helical membrane-spanning segments follow: residues 26–48, 97–119, and 132–150; these read VSGW…GVVT, IAMF…LIVF, and GLYT…YCAW.

It localises to the cell membrane. This is an uncharacterized protein from Archaeoglobus fulgidus (strain ATCC 49558 / DSM 4304 / JCM 9628 / NBRC 100126 / VC-16).